Reading from the N-terminus, the 208-residue chain is MNQKNSLGLNKCFLDKIDPIDLFEVWMNEAKKTELNDPNALALATSDQNNFPSIRMVLLKDFNKDGFVFYTNLNSQKGNELKNNPKASMCFHWKSLLRQVRINGMVQKVSNKVADEYYSSRGYESRIGAWASKQSTVINNRDELLNSIEEYKKKYSNKNDVPRPEHWSGWNLIPTSIEFWLDGESRIHERLKYTKDTEGNWVKSLLSP.

FMN contacts are provided by residues 55–60 (RMVLLK), 70–71 (YT), lysine 77, and glutamine 99. Residue lysine 60 coordinates substrate. 3 residues coordinate substrate: tyrosine 117, arginine 121, and serine 125. Residues 134-135 (QS) and tryptophan 180 contribute to the FMN site. 186–188 (RIH) is a binding site for substrate. Arginine 190 provides a ligand contact to FMN.

It belongs to the pyridoxamine 5'-phosphate oxidase family. Homodimer. FMN is required as a cofactor.

The enzyme catalyses pyridoxamine 5'-phosphate + O2 + H2O = pyridoxal 5'-phosphate + H2O2 + NH4(+). The catalysed reaction is pyridoxine 5'-phosphate + O2 = pyridoxal 5'-phosphate + H2O2. It functions in the pathway cofactor metabolism; pyridoxal 5'-phosphate salvage; pyridoxal 5'-phosphate from pyridoxamine 5'-phosphate: step 1/1. Its pathway is cofactor metabolism; pyridoxal 5'-phosphate salvage; pyridoxal 5'-phosphate from pyridoxine 5'-phosphate: step 1/1. Its function is as follows. Catalyzes the oxidation of either pyridoxine 5'-phosphate (PNP) or pyridoxamine 5'-phosphate (PMP) into pyridoxal 5'-phosphate (PLP). In Pelagibacter ubique (strain HTCC1062), this protein is Pyridoxine/pyridoxamine 5'-phosphate oxidase.